A 229-amino-acid chain; its full sequence is Orotidine 5'-phosphate decarboxylase (229 aa).

Residues D10, K32, 59 to 68 (DLKFHDIPNT), T119, R180, Q189, G209, and R210 each bind substrate. K61 serves as the catalytic Proton donor.

It belongs to the OMP decarboxylase family. Type 1 subfamily. Homodimer.

The catalysed reaction is orotidine 5'-phosphate + H(+) = UMP + CO2. It functions in the pathway pyrimidine metabolism; UMP biosynthesis via de novo pathway; UMP from orotate: step 2/2. In terms of biological role, catalyzes the decarboxylation of orotidine 5'-monophosphate (OMP) to uridine 5'-monophosphate (UMP). The protein is Orotidine 5'-phosphate decarboxylase of Legionella pneumophila subsp. pneumophila (strain Philadelphia 1 / ATCC 33152 / DSM 7513).